Consider the following 249-residue polypeptide: UPF0246 protein Lreu_0493 (249 aa).

It belongs to the UPF0246 family.

The protein is UPF0246 protein Lreu_0493 of Limosilactobacillus reuteri (strain DSM 20016) (Lactobacillus reuteri).